Consider the following 440-residue polypeptide: Thymidine phosphorylase (440 aa).

It belongs to the thymidine/pyrimidine-nucleoside phosphorylase family. As to quaternary structure, homodimer.

The enzyme catalyses thymidine + phosphate = 2-deoxy-alpha-D-ribose 1-phosphate + thymine. The protein operates within pyrimidine metabolism; dTMP biosynthesis via salvage pathway; dTMP from thymine: step 1/2. The enzymes which catalyze the reversible phosphorolysis of pyrimidine nucleosides are involved in the degradation of these compounds and in their utilization as carbon and energy sources, or in the rescue of pyrimidine bases for nucleotide synthesis. This Enterobacter sp. (strain 638) protein is Thymidine phosphorylase.